The primary structure comprises 366 residues: NADH-quinone oxidoreductase subunit H (366 aa).

8 consecutive transmembrane segments (helical) span residues 27-47 (LLLI…LTFA), 99-119 (FLFL…WAVV), 134-154 (LLYI…AGWA), 168-188 (AAQV…VLMM), 206-226 (FLNW…ISGV), 268-288 (ILVA…PVDI), 294-314 (IPGM…FLWF), and 329-349 (LGWK…GMVM).

The protein belongs to the complex I subunit 1 family. NDH-1 is composed of 14 different subunits. Subunits NuoA, H, J, K, L, M, N constitute the membrane sector of the complex.

It is found in the cell inner membrane. The catalysed reaction is a quinone + NADH + 5 H(+)(in) = a quinol + NAD(+) + 4 H(+)(out). Its function is as follows. NDH-1 shuttles electrons from NADH, via FMN and iron-sulfur (Fe-S) centers, to quinones in the respiratory chain. The immediate electron acceptor for the enzyme in this species is believed to be ubiquinone. Couples the redox reaction to proton translocation (for every two electrons transferred, four hydrogen ions are translocated across the cytoplasmic membrane), and thus conserves the redox energy in a proton gradient. This subunit may bind ubiquinone. This Nitrosomonas europaea (strain ATCC 19718 / CIP 103999 / KCTC 2705 / NBRC 14298) protein is NADH-quinone oxidoreductase subunit H.